Consider the following 444-residue polypeptide: C4-dicarboxylate transport protein 3 (444 aa).

The next 9 membrane-spanning stretches (helical) occupy residues 22–42 (VLYVQVLIAIVLGAIVGWLWP), 60–80 (LIKMVIAPIIFCTVVSGIAHI), 95–115 (VYFEVVSTFALVIGLIIGNLV), 162–182 (GEILQVLLFSVLFGFAIMSLG), 198–218 (AVFGVISIVMRAAPIGAFGAM), 236–256 (LIATFYVTAALFVFVVLGIIA), 321–341 (IYMTLATLFIAQALGFDLSFG), 346–366 (ILVVAMLTSKGASGITGAGFI), and 399–419 (LTNLCGNGVACVIVAWWEGEL).

It belongs to the dicarboxylate/amino acid:cation symporter (DAACS) (TC 2.A.23) family.

Its subcellular location is the cell inner membrane. Responsible for the transport of dicarboxylates such as succinate, fumarate, and malate from the periplasm across the membrane. The chain is C4-dicarboxylate transport protein 3 from Bradyrhizobium diazoefficiens (strain JCM 10833 / BCRC 13528 / IAM 13628 / NBRC 14792 / USDA 110).